The chain runs to 469 residues: 6-phospho-beta-galactosidase (469 aa).

D-galactose 6-phosphate is bound by residues glutamine 19, histidine 116, asparagine 159, glutamate 160, and asparagine 297. The active-site Proton donor is glutamate 160. Glutamate 375 acts as the Nucleophile in catalysis. Positions 428, 429, 435, and 437 each coordinate D-galactose 6-phosphate.

This sequence belongs to the glycosyl hydrolase 1 family.

The catalysed reaction is a 6-phospho-beta-D-galactoside + H2O = D-galactose 6-phosphate + an alcohol. It participates in carbohydrate metabolism; lactose degradation; D-galactose 6-phosphate and beta-D-glucose from lactose 6-phosphate: step 1/1. The polypeptide is 6-phospho-beta-galactosidase (Streptococcus equi subsp. zooepidemicus (strain MGCS10565)).